The sequence spans 216 residues: Phosphatidylserine decarboxylase proenzyme (216 aa).

Serine 182 serves as the catalytic Schiff-base intermediate with substrate; via pyruvic acid. Serine 182 bears the Pyruvic acid (Ser); by autocatalysis mark.

It belongs to the phosphatidylserine decarboxylase family. PSD-A subfamily. Heterodimer of a large membrane-associated beta subunit and a small pyruvoyl-containing alpha subunit. It depends on pyruvate as a cofactor. Is synthesized initially as an inactive proenzyme. Formation of the active enzyme involves a self-maturation process in which the active site pyruvoyl group is generated from an internal serine residue via an autocatalytic post-translational modification. Two non-identical subunits are generated from the proenzyme in this reaction, and the pyruvate is formed at the N-terminus of the alpha chain, which is derived from the carboxyl end of the proenzyme. The post-translation cleavage follows an unusual pathway, termed non-hydrolytic serinolysis, in which the side chain hydroxyl group of the serine supplies its oxygen atom to form the C-terminus of the beta chain, while the remainder of the serine residue undergoes an oxidative deamination to produce ammonia and the pyruvoyl prosthetic group on the alpha chain.

Its subcellular location is the cell membrane. It carries out the reaction a 1,2-diacyl-sn-glycero-3-phospho-L-serine + H(+) = a 1,2-diacyl-sn-glycero-3-phosphoethanolamine + CO2. Its pathway is phospholipid metabolism; phosphatidylethanolamine biosynthesis; phosphatidylethanolamine from CDP-diacylglycerol: step 2/2. Its function is as follows. Catalyzes the formation of phosphatidylethanolamine (PtdEtn) from phosphatidylserine (PtdSer). The sequence is that of Phosphatidylserine decarboxylase proenzyme from Burkholderia pseudomallei (strain 1106a).